Reading from the N-terminus, the 108-residue chain is Parvalbumin beta (108 aa).

Position 1 is an N-acetylalanine (A1). EF-hand domains are found at residues K38 to G73 and L77 to A108. D51, D53, S55, F57, E59, E62, D90, D92, D94, K96, and E101 together coordinate Ca(2+).

It belongs to the parvalbumin family.

Its function is as follows. In muscle, parvalbumin is thought to be involved in relaxation after contraction. It binds two calcium ions. In Latimeria chalumnae (Coelacanth), this protein is Parvalbumin beta.